The chain runs to 205 residues: Large ribosomal subunit protein uL18 (205 aa).

This sequence belongs to the universal ribosomal protein uL18 family. As to quaternary structure, part of the 50S ribosomal subunit. Contacts the 5S and 23S rRNAs.

Functionally, this is one of the proteins that bind and probably mediate the attachment of the 5S RNA into the large ribosomal subunit, where it forms part of the central protuberance. The protein is Large ribosomal subunit protein uL18 of Haloquadratum walsbyi (strain DSM 16790 / HBSQ001).